Reading from the N-terminus, the 415-residue chain is ATP-dependent RNA helicase RhlB (415 aa).

The short motif at 9–37 (QRFSALPLHPIVRGALAKKGFDFCTPIQA) is the Q motif element. Positions 40-218 (LPISLNGRDV…FEDMNEPEYI (179 aa)) constitute a Helicase ATP-binding domain. ATP is bound at residue 53 to 60 (AQTGTGKT). Positions 164–167 (DEAD) match the DEAD box motif. The region spanning 241 to 389 (DKMALLLTLM…VSQYETEALL (149 aa)) is the Helicase C-terminal domain.

This sequence belongs to the DEAD box helicase family. RhlB subfamily. As to quaternary structure, component of the RNA degradosome, which is a multiprotein complex involved in RNA processing and mRNA degradation.

It is found in the cytoplasm. The catalysed reaction is ATP + H2O = ADP + phosphate + H(+). Functionally, DEAD-box RNA helicase involved in RNA degradation. Has RNA-dependent ATPase activity and unwinds double-stranded RNA. The polypeptide is ATP-dependent RNA helicase RhlB (Haemophilus influenzae (strain ATCC 51907 / DSM 11121 / KW20 / Rd)).